A 202-amino-acid chain; its full sequence is Elongation factor Ts, chloroplastic (202 aa).

Belongs to the EF-Ts family.

It is found in the plastid. Its subcellular location is the chloroplast. Functionally, associates with the EF-Tu.GDP complex and induces the exchange of GDP to GTP. It remains bound to the aminoacyl-tRNA.EF-Tu.GTP complex up to the GTP hydrolysis stage on the ribosome. The sequence is that of Elongation factor Ts, chloroplastic (tsf) from Phaeodactylum tricornutum (strain CCAP 1055/1).